The sequence spans 991 residues: MLQPSPPHYSSSRDVRHHHHHHHHHHHLALSSKARVFPLSLPCNFSSRVSFKLQLHCAASSSSSVSPPRCSKPNPSSRKRKYGGVIPSILRSLDSSTDIETTLASLCLNLSPKEQTVLLKEQTRWERVLRVFRFFQSHQSYVPNVIHYNIVLRALGRAGKWDELRLCWIEMAHNGVLPTNNTYGMLVDVYGKAGLVKEALLWIKHMGQRMHFPDEVTMATVVRVFKNSGEFDRADRFFKGWCAGKVDLDLDSIDDFPKNGSAQSPVNLKQFLSMELFKVGARNPIEKSLHFASGSDSSPRKPRLTSTFNTLIDLYGKAGRLNDAANLFSEMLKSGVPIDTVTFNTMIHTCGTHGHLSEAESLLKKMEEKGISPDTKTYNILLSLHADAGDIEAALEYYRKIRKVGLFPDTVTHRAVLHILCQRKMVAEVEAVIAEMDRNSIRIDEHSVPVIMQMYVNEGLVVQAKALFERFQLDCVLSSTTLAAVIDVYAEKGLWVEAETVFYGKRNMSGQRNDVLEYNVMIKAYGKAKLHEKALSLFKGMKNQGTWPDECTYNSLFQMLAGVDLVDEAQRILAEMLDSGCKPGCKTYAAMIASYVRLGLLSDAVDLYEAMEKTGVKPNEVVYGSLINGFAESGMVEEAIQYFRMMEEHGVQSNHIVLTSLIKAYSKVGCLEEARRVYDKMKDSEGGPDVAASNSMLSLCADLGIVSEAESIFNALREKGTCDVISFATMMYLYKGMGMLDEAIEVAEEMRESGLLSDCTSFNQVMACYAADGQLSECCELFHEMLVERKLLLDWGTFKTLFTLLKKGGVPSEAVSQLQTAYNEAKPLATPAITATLFSAMGLYAYALESCQELTSGEIPREHFAYNAVIYTYSASGDIDMALKAYMRMQEKGLEPDIVTQAYLVGIYGKAGMVEGVKRVHSRLTFGELEPSQSLFKAVRDAYVSANRQDLADVVKKEMSIAFEAERECSSRSGEEEEDDEEENSEEDEAF.

Disordered regions lie at residues 1-27 (MLQP…HHHH) and 61-81 (SSSS…RKRK). A compositionally biased stretch (basic residues) spans 15–27 (VRHHHHHHHHHHH). The segment covering 61–73 (SSSSVSPPRCSKP) has biased composition (low complexity). PPR repeat units follow at residues 144-178 (NVIH…GVLP), 179-213 (TNNT…MHFP), 214-248 (DEVT…KVDL), 304-338 (LTST…GVPI), 339-373 (DTVT…GISP), 374-408 (DTKT…GLFP), 409-443 (DTVT…SIRI), 444-474 (DEHS…FQLD), 478-513 (SSTT…GQRN), 514-548 (DVLE…GTWP), 549-583 (DECT…GCKP), 584-618 (GCKT…GVKP), 619-653 (NEVV…GVQS), 654-688 (NHIV…EGGP), 689-719 (DVAA…LREK), 723-757 (DVIS…GLLS), 758-792 (DCTS…RKLL), 862-896 (EHFA…GLEP), and 897-931 (DIVT…ELEP). The segment covering 965–974 (AERECSSRSG) has biased composition (basic and acidic residues). Residues 965-991 (AERECSSRSGEEEEDDEEENSEEDEAF) are disordered. Positions 975 to 991 (EEEEDDEEENSEEDEAF) are enriched in acidic residues.

The protein belongs to the PPR family. P subfamily.

The protein is Pentatricopeptide repeat-containing protein At1g73710 of Arabidopsis thaliana (Mouse-ear cress).